The following is a 155-amino-acid chain: Cytochrome c-type biogenesis protein CcmE (155 aa).

Residues 1 to 8 (MNPVRKKR) are Cytoplasmic-facing. Residues 9–29 (LFIVLAILAGVGIAVALALSA) form a helical; Signal-anchor for type II membrane protein membrane-spanning segment. Topologically, residues 30 to 155 (LQQNINLFYT…YEGGKQEYAK (126 aa)) are periplasmic. Heme is bound by residues histidine 124 and tyrosine 128.

The protein belongs to the CcmE/CycJ family.

It localises to the cell inner membrane. Heme chaperone required for the biogenesis of c-type cytochromes. Transiently binds heme delivered by CcmC and transfers the heme to apo-cytochromes in a process facilitated by CcmF and CcmH. This Stutzerimonas stutzeri (strain A1501) (Pseudomonas stutzeri) protein is Cytochrome c-type biogenesis protein CcmE.